The chain runs to 188 residues: FUN14 domain-containing protein 1B (188 aa).

The chain crosses the membrane as a helical span at residues 21–41 (VVNIDGNIFSIYVCFFVCFFF). Positions 52–55 (YEVL) match the YXXL motif. Helical transmembrane passes span 82 to 102 (YSVA…GFLF), 109 to 129 (AATA…GGYI), and 167 to 187 (FFKK…IGLA).

This sequence belongs to the FUN14 family.

The protein resides in the mitochondrion outer membrane. Its function is as follows. Acts as an activator of hypoxia-induced mitophagy, an important mechanism for mitochondrial quality control. The polypeptide is FUN14 domain-containing protein 1B (fundc1-b) (Xenopus laevis (African clawed frog)).